The following is a 406-amino-acid chain: MGPSTPLLILFLLSWSGPLQGQQHHLVEYMERRLAALEERLAQCQDQSSRHAAELRDFKNKMLPLLEVAEKEREALRTEADTISGRVDRLEREVDYLETQNPALPCVEFDEKVTGGPGTKGKGRRNEKYDMVTDCGYTISQVRSMKILKRFGGPAGLWTKDPLGQTEKIYVLDGTQNDTAFVFPRLRDFTLAMAARKASRVRVPFPWVGTGQLVYGGFLYFARRPPGRPGGGGEMENTLQLIKFHLANRTVVDSSVFPAEGLIPPYGLTADTYIDLAADEEGLWAVYATREDDRHLCLAKLDPQTLDTEQQWDTPCPRENAEAAFVICGTLYVVYNTRPASRARIQCSFDASGTLTPERAALPYFPRRYGAHASLRYNPRERQLYAWDDGYQIVYKLEMRKKEEEV.

Positions 1–21 (MGPSTPLLILFLLSWSGPLQG) are cleaved as a signal peptide. Positions 25–101 (HLVEYMERRL…REVDYLETQN (77 aa)) form a coiled coil. The 268-residue stretch at 134–401 (DCGYTISQVR…QIVYKLEMRK (268 aa)) folds into the Olfactomedin-like domain. Cys135 and Cys328 are joined by a disulfide. N-linked (GlcNAc...) asparagine glycans are attached at residues Asn177 and Asn248.

The protein belongs to the OLFML3 family. Abundant in placenta, moderate in liver and heart, whereas fairly weak in other tissues examined. On term placenta, mainly localized extracellularly surrounding the syncytiotrophoblastic cells and very rarely expressed in the maternal decidua layer.

The protein resides in the secreted. Secreted scaffold protein that plays an essential role in dorsoventral patterning during early development. Stabilizes axial formation by restricting chordin (CHRD) activity on the dorsal side. Acts by facilitating the association between the tolloid proteases and their substrate chordin (CHRD), leading to enhance chordin (CHRD) degradation. May have matrix-related function involved in placental and embryonic development, or play a similar role in other physiological processes. This Homo sapiens (Human) protein is Olfactomedin-like protein 3 (OLFML3).